The primary structure comprises 423 residues: Haloacid dehalogenase-like hydrolase domain-containing 5 (423 aa).

The signal sequence occupies residues 1 to 23 (MAAWGCVAALGAARGLCWRAARA).

It belongs to the HAD-like hydrolase superfamily. Widely expressed.

The sequence is that of Haloacid dehalogenase-like hydrolase domain-containing 5 from Homo sapiens (Human).